Reading from the N-terminus, the 1617-residue chain is ATP-binding cassette sub-family A member 6 (1617 aa).

The chain crosses the membrane as a helical span at residues 31–51 (LLEWGLSILLGLCIALFSSSM). 2 N-linked (GlcNAc...) asparagine glycosylation sites follow: Asn-84 and Asn-109. Helical transmembrane passes span 222–242 (MFILFFLLHFSPLVYFISLNV), 268–288 (GLIYAGFIFIISIFVTIIITF), 297–317 (FMVIFILFFLYGLSLVALVFL), 327–347 (LTNLVVFLLTLFWGCLGFTVF), 355–375 (LEWILNICSPFAFTTGMIQII), and 397–417 (IATFSMLLLDGLIYLLLALYF). The 236-residue stretch at 478–713 (IRIRNVKKEY…WGLGYHLSLH (236 aa)) folds into the ABC transporter 1 domain. 514–521 (GHSGAGKS) serves as a coordination point for ATP. A helical membrane pass occupies residues 854–874 (VLLTLLLVFGIAIFPLIVENI). A glycan (N-linked (GlcNAc...) asparagine) is linked at Asn-940. 6 helical membrane-spanning segments follow: residues 1007–1027 (IGLWTGLPDGSFFLFLVLCSI), 1062–1082 (ALVDVSFFILILLLMYLIFYI), 1094–1114 (IVFALVIVTPGYAASLVFFIY), 1127–1147 (SGLWSFYFFFASTIMFSITLI), 1150–1170 (FDLSILITTMVLVPSYTLLGF), and 1194–1214 (ATDFLVCFIPYFQTLLFVFVL). In terms of domain architecture, ABC transporter 2 spans 1288–1513 (GQKKSCFSKR…LGKDYILELK (226 aa)). Residue 1320–1327 (GPNGAGKS) participates in ATP binding.

The protein belongs to the ABC transporter superfamily. ABCA family. As to expression, widely expressed with higher expression in liver.

The protein resides in the golgi apparatus membrane. In terms of biological role, probable transporter which may play a role in macrophage lipid transport and homeostasis. This chain is ATP-binding cassette sub-family A member 6 (ABCA6), found in Homo sapiens (Human).